The chain runs to 121 residues: MAQTVVLKVGMSCQGCVGAVNRVLGKMEGVESFDIDIKEQKVTVKGNVEPEAVFQTVSKTGKKTSYWPVEAEAEPKAEADPKVETVTETKTEAETKTEAKVDAKADVEPKAAEAETKPSQV.

N-acetylalanine is present on A2. The HMA domain maps to 2 to 65; the sequence is AQTVVLKVGM…TVSKTGKKTS (64 aa). Positions 13 and 16 each coordinate Cu cation. A disordered region spans residues 70-121; the sequence is EAEAEPKAEADPKVETVTETKTEAETKTEAKVDAKADVEPKAAEAETKPSQV. Positions 73–121 are enriched in basic and acidic residues; that stretch reads AEPKAEADPKVETVTETKTEAETKTEAKVDAKADVEPKAAEAETKPSQV.

Belongs to the ATX1 family. Cu cation serves as cofactor. Expressed in phloem (at protein level).

Functionally, involved in copper homeostasis. Can complement the yeast mutants atx1 and sod1. The chain is Copper transport protein CCH (CCH) from Arabidopsis thaliana (Mouse-ear cress).